The primary structure comprises 398 residues: MTYNKRLFTSESVTEGHPDKIADQVSDAILDEILKDDPNARVACETTVTTGMALISGEISTTTYVDIPKVVRETIKEIGYTRAKFGYDSQTMAVLTAIDEQSPDIAQGVDTALEYRDEASEAEIEATGAGDQGLMFGYATNETDTYMPLPIFLSHQLAKRLSDVRKDEILKYLRPDGKVQVTVEYDEQDKPVRIDTIVLSTQHAEDIELDQIKDDIKTHVIYPTVPESLLDEQTKFYINPTGRFVIGGPQGDAGLTGRKIIVDTYGGYARHGGGCFSGKDPTKVDRSAAYAARYVAKNIVAAQLAEKCEVQLAYAIGVAEPVSISIDTFGTGKVSEYELVEAVRKHFDLRPAGIIKMLDLKHPIYKQTAAYGHFGRTDVLLPWEKLDKVNLLKDSVKA.

An ATP-binding site is contributed by histidine 17. Aspartate 19 is a Mg(2+) binding site. Position 45 (glutamate 45) interacts with K(+). L-methionine-binding residues include glutamate 58 and glutamine 101. The segment at 101 to 111 (QSPDIAQGVDT) is flexible loop. ATP is bound by residues 176-178 (DGK), 243-244 (RF), aspartate 252, 258-259 (RK), and lysine 279. Aspartate 252 is an L-methionine binding site. Position 283 (lysine 283) interacts with L-methionine.

This sequence belongs to the AdoMet synthase family. As to quaternary structure, homotetramer; dimer of dimers. The cofactor is Mg(2+). Requires K(+) as cofactor.

The protein localises to the cytoplasm. It carries out the reaction L-methionine + ATP + H2O = S-adenosyl-L-methionine + phosphate + diphosphate. It participates in amino-acid biosynthesis; S-adenosyl-L-methionine biosynthesis; S-adenosyl-L-methionine from L-methionine: step 1/1. Its function is as follows. Catalyzes the formation of S-adenosylmethionine (AdoMet) from methionine and ATP. The overall synthetic reaction is composed of two sequential steps, AdoMet formation and the subsequent tripolyphosphate hydrolysis which occurs prior to release of AdoMet from the enzyme. The polypeptide is S-adenosylmethionine synthase (Staphylococcus saprophyticus subsp. saprophyticus (strain ATCC 15305 / DSM 20229 / NCIMB 8711 / NCTC 7292 / S-41)).